We begin with the raw amino-acid sequence, 86 residues long: Small ribosomal subunit protein bS18 (86 aa).

Belongs to the bacterial ribosomal protein bS18 family. As to quaternary structure, part of the 30S ribosomal subunit. Forms a tight heterodimer with protein bS6.

In terms of biological role, binds as a heterodimer with protein bS6 to the central domain of the 16S rRNA, where it helps stabilize the platform of the 30S subunit. In Campylobacter lari (strain RM2100 / D67 / ATCC BAA-1060), this protein is Small ribosomal subunit protein bS18.